A 52-amino-acid polypeptide reads, in one-letter code: Large ribosomal subunit protein bL33 (52 aa).

The protein belongs to the bacterial ribosomal protein bL33 family.

In Helicobacter pylori (strain HPAG1), this protein is Large ribosomal subunit protein bL33.